We begin with the raw amino-acid sequence, 154 residues long: Transcriptional repressor NrdR (154 aa).

A zinc finger lies at 3–34 (CPFCRHPDSRVVDSRETDEGQAIRRRRSCPEC). The 91-residue stretch at 46-136 (LAVVKRSGVT…VYRSFSSAED (91 aa)) folds into the ATP-cone domain.

It belongs to the NrdR family. Zn(2+) is required as a cofactor.

In terms of biological role, negatively regulates transcription of bacterial ribonucleotide reductase nrd genes and operons by binding to NrdR-boxes. This chain is Transcriptional repressor NrdR, found in Mycolicibacterium vanbaalenii (strain DSM 7251 / JCM 13017 / BCRC 16820 / KCTC 9966 / NRRL B-24157 / PYR-1) (Mycobacterium vanbaalenii).